Here is a 190-residue protein sequence, read N- to C-terminus: MLLSDRDLRAEISSGRLGIDPFDDTLVQPSSIDVRLDCLFRVFNNTRYTHIDPAKQQDELTSLVQPVDGEPFVLHPGEFVLGSTLELFTLPDNLAGRLEGKSSLGRLGLLTHSTAGFIDPGFSGHITLELSNVANLPITLWPGMKIGQLCMLRLTSPSEHPYGSSRAGSKYQGQRGPTPSRSCQNFIRST.

DCTP is bound by residues 101-106 (KSSLGR), Asp-119, 127-129 (TLE), Gln-148, Tyr-162, Lys-170, and Gln-174. Glu-129 serves as the catalytic Proton donor/acceptor. Residues 160–190 (HPYGSSRAGSKYQGQRGPTPSRSCQNFIRST) form a disordered region. A compositionally biased stretch (polar residues) spans 171–190 (YQGQRGPTPSRSCQNFIRST).

Belongs to the dCTP deaminase family. Homotrimer.

It catalyses the reaction dCTP + 2 H2O = dUMP + NH4(+) + diphosphate. The protein operates within pyrimidine metabolism; dUMP biosynthesis; dUMP from dCTP: step 1/1. Bifunctional enzyme that catalyzes both the deamination of dCTP to dUTP and the hydrolysis of dUTP to dUMP without releasing the toxic dUTP intermediate. The protein is dCTP deaminase, dUMP-forming of Mycobacterium bovis (strain ATCC BAA-935 / AF2122/97).